A 363-amino-acid polypeptide reads, in one-letter code: MAELNKTKVRKELRTERPSIYSFELDEIKQWLTDNGEKPFRAAQIFEWLYEKRVSSFEDMTNLSKDLREKLNTRFVLTTLKTAVKQTSQDGTMKFLFELHDGYTIETVLMRHEYGNSVCVTTQVGCRIGCTFCASTLGGLKRNLEAGEIVAQVVKVQKALDETDERVSSVVIMGIGEPFDNFNEMLAFLKIINHDKGLNIGARHITVSTSGIIPKIYEFADQQMQINFAISLHAPNTEIRSRLMPINRAYKLPDLMEAVKYYINKTGRRISFEYGLFGGVNDQVEHAEELADLLEGVKCHVNLIPVNYVPERDYVRTPRDQIFAFEKTLKSRGVNVTIRREQGHDIDAACGQLRAKERQDETR.

The active-site Proton acceptor is the E106. Positions H112 to D345 constitute a Radical SAM core domain. C119 and C350 are oxidised to a cystine. Residues C126, C130, and C133 each contribute to the [4Fe-4S] cluster site. S-adenosyl-L-methionine contacts are provided by residues G176–E177, S208, S231–H233, and N307. C350 serves as the catalytic S-methylcysteine intermediate.

The protein belongs to the radical SAM superfamily. RlmN family. The cofactor is [4Fe-4S] cluster.

It is found in the cytoplasm. The enzyme catalyses adenosine(2503) in 23S rRNA + 2 reduced [2Fe-2S]-[ferredoxin] + 2 S-adenosyl-L-methionine = 2-methyladenosine(2503) in 23S rRNA + 5'-deoxyadenosine + L-methionine + 2 oxidized [2Fe-2S]-[ferredoxin] + S-adenosyl-L-homocysteine. It catalyses the reaction adenosine(37) in tRNA + 2 reduced [2Fe-2S]-[ferredoxin] + 2 S-adenosyl-L-methionine = 2-methyladenosine(37) in tRNA + 5'-deoxyadenosine + L-methionine + 2 oxidized [2Fe-2S]-[ferredoxin] + S-adenosyl-L-homocysteine. Specifically methylates position 2 of adenine 2503 in 23S rRNA and position 2 of adenine 37 in tRNAs. This Bacillus subtilis (strain 168) protein is Probable dual-specificity RNA methyltransferase RlmN.